The following is an 89-amino-acid chain: Small ribosomal subunit protein uS17 (89 aa).

Belongs to the universal ribosomal protein uS17 family. In terms of assembly, part of the 30S ribosomal subunit.

One of the primary rRNA binding proteins, it binds specifically to the 5'-end of 16S ribosomal RNA. In Acidovorax ebreus (strain TPSY) (Diaphorobacter sp. (strain TPSY)), this protein is Small ribosomal subunit protein uS17.